We begin with the raw amino-acid sequence, 338 residues long: Peptidyl-prolyl cis-trans isomerase cyp11 (338 aa).

Positions 7–172 constitute a PPIase cyclophilin-type domain; it reads FFDIDVDGNR…HNVMIANCGE (166 aa). The disordered stretch occupies residues 186–338; that stretch reads ASAVSDESED…RGRFKYRPTY (153 aa). Residues 208–218 are compositionally biased toward acidic residues; sequence DDSSSDEDSEE. Residues 223-242 are compositionally biased toward basic residues; it reads RTKKKRSRKHSKKDKKKKKR. The segment covering 243 to 309 has biased composition (basic and acidic residues); it reads ESSNRKRSPE…PEKRSSERRV (67 aa). A compositionally biased stretch (basic residues) spans 329–338; the sequence is RGRFKYRPTY.

It belongs to the cyclophilin-type PPIase family.

It catalyses the reaction [protein]-peptidylproline (omega=180) = [protein]-peptidylproline (omega=0). Its function is as follows. PPIases accelerate the folding of proteins. It catalyzes the cis-trans isomerization of proline imidic peptide bonds in oligopeptides. In Rhizopus delemar (strain RA 99-880 / ATCC MYA-4621 / FGSC 9543 / NRRL 43880) (Mucormycosis agent), this protein is Peptidyl-prolyl cis-trans isomerase cyp11 (cyp11).